The primary structure comprises 340 residues: 3-isopropylmalate dehydrogenase (340 aa).

Substrate contacts are provided by arginine 88, arginine 98, arginine 122, and aspartate 212. The Mg(2+) site is built by aspartate 212, aspartate 236, and aspartate 240. Residue 272–284 (GSAPDIAGQGIAD) participates in NAD(+) binding.

The protein belongs to the isocitrate and isopropylmalate dehydrogenases family. LeuB type 2 subfamily. In terms of assembly, homodimer. The cofactor is Mg(2+). Mn(2+) serves as cofactor.

It is found in the cytoplasm. The catalysed reaction is (2R,3S)-3-isopropylmalate + NAD(+) = 4-methyl-2-oxopentanoate + CO2 + NADH. The protein operates within amino-acid biosynthesis; L-leucine biosynthesis; L-leucine from 3-methyl-2-oxobutanoate: step 3/4. Catalyzes the oxidation of 3-carboxy-2-hydroxy-4-methylpentanoate (3-isopropylmalate) to 3-carboxy-4-methyl-2-oxopentanoate. The product decarboxylates to 4-methyl-2 oxopentanoate. The chain is 3-isopropylmalate dehydrogenase from Corynebacterium glutamicum (strain R).